Consider the following 289-residue polypeptide: Ribonuclease H2 subunit A (289 aa).

An RNase H type-2 domain is found at 20–249 (PFVMGIDEAG…TETAMRGACF (230 aa)). 3 residues coordinate a divalent metal cation: aspartate 26, glutamate 27, and aspartate 134.

Belongs to the RNase HII family. Eukaryotic subfamily. The cofactor is Mn(2+). Mg(2+) is required as a cofactor.

The enzyme catalyses Endonucleolytic cleavage to 5'-phosphomonoester.. Functionally, endonuclease that specifically degrades the RNA of RNA-DNA hybrids. Participates in DNA replication. This is Ribonuclease H2 subunit A (rnaseh2A) from Dictyostelium discoideum (Social amoeba).